We begin with the raw amino-acid sequence, 635 residues long: Threonine--tRNA ligase (635 aa).

In terms of domain architecture, TGS spans M1–T61. The segment at D242–P532 is catalytic. C333, H384, and H509 together coordinate Zn(2+).

Belongs to the class-II aminoacyl-tRNA synthetase family. As to quaternary structure, homodimer. The cofactor is Zn(2+).

The protein resides in the cytoplasm. The enzyme catalyses tRNA(Thr) + L-threonine + ATP = L-threonyl-tRNA(Thr) + AMP + diphosphate + H(+). Functionally, catalyzes the attachment of threonine to tRNA(Thr) in a two-step reaction: L-threonine is first activated by ATP to form Thr-AMP and then transferred to the acceptor end of tRNA(Thr). Also edits incorrectly charged L-seryl-tRNA(Thr). The chain is Threonine--tRNA ligase from Desulforamulus reducens (strain ATCC BAA-1160 / DSM 100696 / MI-1) (Desulfotomaculum reducens).